Reading from the N-terminus, the 1146-residue chain is Lysine-specific demethylase 2A (1146 aa).

The JmjC domain maps to 146 to 314 (FSHTKLENLV…MQLRIYSIED (169 aa)). Residue Thr-207 coordinates substrate. Residues His-210 and Asp-212 each coordinate Fe cation. Lys-227 serves as a coordination point for substrate. Residue His-282 participates in Fe cation binding. Disordered stretches follow at residues 363-467 (LNGR…PDSP) and 554-585 (TKPHTMRPASRHSTAPPRTSGTPSGTTASSGA). Over residues 373–387 (SSSSSSSSSGLSSSS) the composition is skewed to low complexity. The segment covering 388 to 401 (DNDDSSDQDWEEEE) has biased composition (acidic residues). The span at 402-442 (GLRKRERDRCRVERELQRKRNRDRQQRDQERDRHGRTERII) shows a compositional bias: basic and acidic residues. The segment covering 453–467 (LTPPPSLPLPTPDSP) has biased composition (pro residues). Over residues 566–584 (STAPPRTSGTPSGTTASSG) the composition is skewed to low complexity. The CXXC-type zinc-finger motif lies at 585–631 (ARRRRVRCRKCQACVQRECGTCHYCKDMKKFGGPGRMKQSCVLRQCL). Zn(2+) is bound by residues Cys-592, Cys-595, Cys-598, Cys-603, Cys-606, Cys-609, Cys-625, and Cys-630. The PHD-type zinc finger occupies 638-699 (SVTCALCGEV…YWECPKCYEG (62 aa)). Disordered regions lie at residues 733–800 (VLRP…EGDR) and 832–867 (TPNPRQPIRAAPLHQDEEREEEEEEEEEEEETENVM). Over residues 739–762 (GQSPPSPPLLLLPPSPSSAPPTPP) the composition is skewed to pro residues. Residues 772 to 789 (SREERAKRRQLAREKENH) are compositionally biased toward basic and acidic residues. Over residues 849–864 (EREEEEEEEEEEEETE) the composition is skewed to acidic residues. The F-box domain maps to 874–919 (STSMQKDVWLSVFHYLTHEELCICMRVCKAWYKWGCDKRLWSRIDV). LRR repeat units lie at residues 945 to 966 (WTNVSKKQLIWLINRLPGLKDL), 968 to 994 (LAGCTWSAVSALASCSCPLLRTLDLRW), 1032 to 1057 (GLDISDVTLRLIIRHCPLLSKLDLSH), 1058 to 1087 (CPLLSDQSVNLLTAVGSSTRGTLTHIHLAG), 1088 to 1112 (CKGVTDESLLYLRRATNLSLIDLHG), and 1113 to 1138 (CKQVTRGACEEFISDLSVSTLYCLSD).

The protein belongs to the JHDM1 histone demethylase family. It depends on Fe(2+) as a cofactor.

It localises to the nucleus. Its subcellular location is the nucleoplasm. It carries out the reaction N(6),N(6)-dimethyl-L-lysyl(36)-[histone H3] + 2 2-oxoglutarate + 2 O2 = L-lysyl(36)-[histone H3] + 2 formaldehyde + 2 succinate + 2 CO2. Its function is as follows. Histone demethylase that specifically demethylates 'Lys-36' of histone H3, thereby playing a central role in histone code. Preferentially demethylates dimethylated H3 'Lys-36' residue while it has weak or no activity for mono- and tri-methylated H3 'Lys-36'. May also recognize and bind to some phosphorylated proteins and promote their ubiquitination and degradation. Required to maintain the heterochromatic state. Associates with centromeres and represses transcription of small non-coding RNAs that are encoded by the clusters of satellite repeats at the centromere. Required to sustain centromeric integrity and genomic stability, particularly during mitosis. May play a role in the regulation of circadian gene expression. The sequence is that of Lysine-specific demethylase 2A (kdm2a) from Xenopus tropicalis (Western clawed frog).